The sequence spans 281 residues: Nucleoid occlusion protein (281 aa).

Positions 1–26 (MKHPFSRLFSFGEKEQEEAGGKQERE) are disordered. Residues 12-26 (GEKEQEEAGGKQERE) show a composition bias toward basic and acidic residues. Residues 145–164 (EALAQRLGKGQSTIANKLRL) constitute a DNA-binding region (H-T-H motif).

The protein belongs to the ParB family.

The protein localises to the cytoplasm. It localises to the nucleoid. In terms of biological role, effects nucleoid occlusion by binding relatively nonspecifically to DNA and preventing the assembly of the division machinery in the vicinity of the nucleoid, especially under conditions that disturb the cell cycle. It helps to coordinate cell division and chromosome segregation by preventing the formation of the Z ring through the nucleoid, which would cause chromosome breakage. The sequence is that of Nucleoid occlusion protein from Geobacillus thermodenitrificans (strain NG80-2).